Here is a 446-residue protein sequence, read N- to C-terminus: Nitrate/nitrite binding protein NrtA (446 aa).

The signal sequence occupies residues 1-28 (MSNFSRSTRRKFMFTAGAAAIGGVVLHG). The N-palmitoyl cysteine moiety is linked to residue Cys29. Cys29 carries the S-diacylglycerol cysteine lipid modification. The nitrate site is built by Trp102, Gln155, His196, Gly240, and Lys269.

This sequence belongs to the CmpA/NrtA family. The complex is composed of two ATP-binding proteins (NrtC and NrtD), two transmembrane proteins (NrtB) and a solute-binding protein (NrtA).

It is found in the cell inner membrane. Functionally, part of the ABC transporter complex NrtABCD involved in nitrate uptake. The complex is probably also involved in nitrite transport. NrtA is the substrate-binding protein. Binds nitrate. This is Nitrate/nitrite binding protein NrtA from Synechocystis sp. (strain ATCC 27184 / PCC 6803 / Kazusa).